The sequence spans 371 residues: Cytochrome b (371 aa).

Transmembrane regions (helical) follow at residues 25–45 (FGSMLLTCLMLQVLTGFFLAI), 69–90 (WIMQNTHAIGASLFFICIYIHI), 105–125 (WLSGVTLLMTLMATAFFGYVL), and 170–190 (FFALHFILPFIIISLSSIHII). Histidine 75 and histidine 89 together coordinate heme b. 2 residues coordinate heme b: histidine 174 and histidine 188. Histidine 193 is a binding site for a ubiquinone. 4 helical membrane-spanning segments follow: residues 218–238 (YKDLMTTTSMIILLFIILSFS), 280–300 (LGGTLALLMSILILTLPPFTH), 312–332 (LSQTLFWTLIATFVMITWTAT), and 339–358 (FITISQLTSIFYFSFFIMNP).

This sequence belongs to the cytochrome b family. In terms of assembly, the cytochrome bc1 complex contains 3 respiratory subunits (MT-CYB, CYC1 and UQCRFS1), 2 core proteins (UQCRC1 and UQCRC2) and probably 6 low-molecular weight proteins. It depends on heme b as a cofactor.

It is found in the mitochondrion inner membrane. Functionally, component of the ubiquinol-cytochrome c reductase complex (complex III or cytochrome b-c1 complex) that is part of the mitochondrial respiratory chain. The b-c1 complex mediates electron transfer from ubiquinol to cytochrome c. Contributes to the generation of a proton gradient across the mitochondrial membrane that is then used for ATP synthesis. In Micrurus fulvius (Eastern coral snake), this protein is Cytochrome b (MT-CYB).